The following is a 262-amino-acid chain: 3-methyl-2-oxobutanoate hydroxymethyltransferase (262 aa).

2 residues coordinate Mg(2+): D42 and D81. Residues 42–43, D81, and K110 contribute to the 3-methyl-2-oxobutanoate site; that span reads DS. E112 contributes to the Mg(2+) binding site. The Proton acceptor role is filled by E180.

Belongs to the PanB family. As to quaternary structure, homodecamer; pentamer of dimers. Requires Mg(2+) as cofactor.

It is found in the cytoplasm. The enzyme catalyses 3-methyl-2-oxobutanoate + (6R)-5,10-methylene-5,6,7,8-tetrahydrofolate + H2O = 2-dehydropantoate + (6S)-5,6,7,8-tetrahydrofolate. It participates in cofactor biosynthesis; (R)-pantothenate biosynthesis; (R)-pantoate from 3-methyl-2-oxobutanoate: step 1/2. Its function is as follows. Catalyzes the reversible reaction in which hydroxymethyl group from 5,10-methylenetetrahydrofolate is transferred onto alpha-ketoisovalerate to form ketopantoate. In Legionella pneumophila (strain Paris), this protein is 3-methyl-2-oxobutanoate hydroxymethyltransferase.